The chain runs to 550 residues: Thermosome subunit (550 aa).

The interval 529–550 (KEKEGEKGGGGSEDFSSSSDLD) is disordered. The span at 541–550 (EDFSSSSDLD) shows a compositional bias: low complexity.

It belongs to the TCP-1 chaperonin family. As to quaternary structure, forms an oligomeric complex of eight-membered rings.

Its function is as follows. Molecular chaperone; binds unfolded polypeptides in vitro, and has a weak ATPase activity. This chain is Thermosome subunit (ths), found in Pyrococcus abyssi (strain GE5 / Orsay).